A 383-amino-acid polypeptide reads, in one-letter code: La protein homolog (383 aa).

The disordered stretch occupies residues 1–43 (MTEVEAKATATEETTKEEEEAPETTAEQTEESAQETSENVSKL). A compositionally biased stretch (acidic residues) spans 15 to 33 (TKEEEEAPETTAEQTEESA). In terms of domain architecture, HTH La-type RNA-binding spans 37-129 (SENVSKLEAS…RRHPERPLPE (93 aa)). The RRM domain maps to 141 to 228 (RTVYVKGFAP…RKMQDDYFEE (88 aa)). A xRRM domain is found at 249–368 (HLPKGASVHL…RTPEGRQASR (120 aa)). Residues 343-383 (KDQQARRQASNARNKGRTPEGRQASRPPQEWRRKAKGGRGE) are disordered.

The protein resides in the nucleus. The protein localises to the cytoplasm. Functionally, may be involved in transcription termination by RNA polymerase III. Binds RNA and DNA. Binds to the 3' end of the minus strand of Sindbis virus RNA. This may be significant for Sindbis virus RNA replication. In Aedes albopictus (Asian tiger mosquito), this protein is La protein homolog.